A 291-amino-acid chain; its full sequence is Pyridoxal 5'-phosphate synthase subunit PdxS (291 aa).

Residue aspartate 23 participates in D-ribose 5-phosphate binding. Lysine 80 functions as the Schiff-base intermediate with D-ribose 5-phosphate in the catalytic mechanism. D-ribose 5-phosphate is bound at residue glycine 152. A D-glyceraldehyde 3-phosphate-binding site is contributed by arginine 164. D-ribose 5-phosphate-binding positions include glycine 213 and 234–235 (GS).

It belongs to the PdxS/SNZ family. In terms of assembly, in the presence of PdxT, forms a dodecamer of heterodimers.

It catalyses the reaction aldehydo-D-ribose 5-phosphate + D-glyceraldehyde 3-phosphate + L-glutamine = pyridoxal 5'-phosphate + L-glutamate + phosphate + 3 H2O + H(+). It functions in the pathway cofactor biosynthesis; pyridoxal 5'-phosphate biosynthesis. In terms of biological role, catalyzes the formation of pyridoxal 5'-phosphate from ribose 5-phosphate (RBP), glyceraldehyde 3-phosphate (G3P) and ammonia. The ammonia is provided by the PdxT subunit. Can also use ribulose 5-phosphate and dihydroxyacetone phosphate as substrates, resulting from enzyme-catalyzed isomerization of RBP and G3P, respectively. This chain is Pyridoxal 5'-phosphate synthase subunit PdxS, found in Bifidobacterium longum (strain NCC 2705).